The primary structure comprises 162 residues: Large ribosomal subunit protein uL10 (162 aa).

This sequence belongs to the universal ribosomal protein uL10 family. As to quaternary structure, part of the ribosomal stalk of the 50S ribosomal subunit. The N-terminus interacts with L11 and the large rRNA to form the base of the stalk. The C-terminus forms an elongated spine to which L12 dimers bind in a sequential fashion forming a multimeric L10(L12)X complex.

Its function is as follows. Forms part of the ribosomal stalk, playing a central role in the interaction of the ribosome with GTP-bound translation factors. The polypeptide is Large ribosomal subunit protein uL10 (Acholeplasma laidlawii (strain PG-8A)).